The sequence spans 231 residues: Aquaporin Z (231 aa).

The next 2 helical transmembrane spans lie at 9–29 (LLGT…AAAF) and 34–54 (IGFV…IYAV). Positions 63–65 (NPA) match the NPA 1 motif. The next 3 membrane-spanning stretches (helical) occupy residues 82–102 (IPYI…LYVI), 133–153 (SAIV…IGAT), and 160–180 (GFAP…SIPI). The NPA 2 motif lies at 186 to 188 (NPA). A helical transmembrane segment spans residues 202-222 (LEQLWFFWVMPIIGGIVGGGI).

The protein belongs to the MIP/aquaporin (TC 1.A.8) family. In terms of assembly, homotetramer.

It localises to the cell inner membrane. It carries out the reaction H2O(in) = H2O(out). Its function is as follows. Channel that permits osmotically driven movement of water in both directions. It is involved in the osmoregulation and in the maintenance of cell turgor during volume expansion in rapidly growing cells. It mediates rapid entry or exit of water in response to abrupt changes in osmolarity. In Photorhabdus laumondii subsp. laumondii (strain DSM 15139 / CIP 105565 / TT01) (Photorhabdus luminescens subsp. laumondii), this protein is Aquaporin Z.